Reading from the N-terminus, the 153-residue chain is UPF0260 protein Plav_0898 (153 aa).

It belongs to the UPF0260 family.

The chain is UPF0260 protein Plav_0898 from Parvibaculum lavamentivorans (strain DS-1 / DSM 13023 / NCIMB 13966).